The sequence spans 82 residues: UPF0235 protein Pden_2174 (82 aa).

Belongs to the UPF0235 family.

The chain is UPF0235 protein Pden_2174 from Paracoccus denitrificans (strain Pd 1222).